We begin with the raw amino-acid sequence, 466 residues long: Ribulose bisphosphate carboxylase (466 aa).

Asn-111 contributes to the substrate binding site. Residue Lys-166 is the Proton acceptor of the active site. Lys-168 contacts substrate. Mg(2+) is bound by residues Lys-191, Asp-193, and Glu-194. Lys-191 bears the N6-carboxylysine mark. Catalysis depends on His-287, which acts as the Proton acceptor. Substrate-binding residues include Arg-288, His-321, and Ser-368.

This sequence belongs to the RuBisCO large chain family. Type II subfamily. In terms of assembly, homodimer. Requires Mg(2+) as cofactor.

It catalyses the reaction 2 (2R)-3-phosphoglycerate + 2 H(+) = D-ribulose 1,5-bisphosphate + CO2 + H2O. The catalysed reaction is D-ribulose 1,5-bisphosphate + O2 = 2-phosphoglycolate + (2R)-3-phosphoglycerate + 2 H(+). RuBisCO catalyzes two reactions: the carboxylation of D-ribulose 1,5-bisphosphate, the primary event in carbon dioxide fixation, as well as the oxidative fragmentation of the pentose substrate. Both reactions occur simultaneously and in competition at the same active site. The polypeptide is Ribulose bisphosphate carboxylase (Rhodospirillum rubrum (strain ATCC 11170 / ATH 1.1.1 / DSM 467 / LMG 4362 / NCIMB 8255 / S1)).